Reading from the N-terminus, the 640-residue chain is Translation factor GUF1, mitochondrial (640 aa).

The transit peptide at 1–26 (MRRLRSLYLQSSICFRRFNHYSAKDT) directs the protein to the mitochondrion. Residues 39–223 (ENYRNFSIVA…AIIDRIPPPT (185 aa)) form the tr-type G domain. GTP is bound by residues 48–55 (AHVDHGKS), 115–119 (DTPGH), and 169–172 (NKID).

The protein belongs to the TRAFAC class translation factor GTPase superfamily. Classic translation factor GTPase family. LepA subfamily.

Its subcellular location is the mitochondrion inner membrane. It carries out the reaction GTP + H2O = GDP + phosphate + H(+). In terms of biological role, promotes mitochondrial protein synthesis. May act as a fidelity factor of the translation reaction, by catalyzing a one-codon backward translocation of tRNAs on improperly translocated ribosomes. Binds to mitochondrial ribosomes in a GTP-dependent manner. In Lachancea thermotolerans (strain ATCC 56472 / CBS 6340 / NRRL Y-8284) (Yeast), this protein is Translation factor GUF1, mitochondrial.